The sequence spans 117 residues: Large ribosomal subunit protein bL20 (117 aa).

This sequence belongs to the bacterial ribosomal protein bL20 family.

Functionally, binds directly to 23S ribosomal RNA and is necessary for the in vitro assembly process of the 50S ribosomal subunit. It is not involved in the protein synthesizing functions of that subunit. The chain is Large ribosomal subunit protein bL20 from Rickettsia felis (strain ATCC VR-1525 / URRWXCal2) (Rickettsia azadi).